An 859-amino-acid chain; its full sequence is Leucine--tRNA ligase (859 aa).

A 'HIGH' region motif is present at residues 42 to 52 (PYPSGRLHMGH). Positions 618 to 622 (KMSKS) match the 'KMSKS' region motif. Residue K621 coordinates ATP.

It belongs to the class-I aminoacyl-tRNA synthetase family.

The protein localises to the cytoplasm. The catalysed reaction is tRNA(Leu) + L-leucine + ATP = L-leucyl-tRNA(Leu) + AMP + diphosphate. This Shewanella oneidensis (strain ATCC 700550 / JCM 31522 / CIP 106686 / LMG 19005 / NCIMB 14063 / MR-1) protein is Leucine--tRNA ligase.